The sequence spans 106 residues: MADFLGMMKQAAQLQSKMKAMQAELDQIEVEGLSGGGLVKVRMSAKMEVRGISIDPSLIKADEREVLEDLLAAAHGDAHRKAEAAMQEKMQALTGGLGLPPGLGLG.

Belongs to the YbaB/EbfC family. As to quaternary structure, homodimer.

Its subcellular location is the cytoplasm. The protein localises to the nucleoid. Functionally, binds to DNA and alters its conformation. May be involved in regulation of gene expression, nucleoid organization and DNA protection. The chain is Nucleoid-associated protein RPA0616 from Rhodopseudomonas palustris (strain ATCC BAA-98 / CGA009).